We begin with the raw amino-acid sequence, 131 residues long: Ribosome-binding factor A (131 aa).

This sequence belongs to the RbfA family. As to quaternary structure, monomer. Binds 30S ribosomal subunits, but not 50S ribosomal subunits or 70S ribosomes.

Its subcellular location is the cytoplasm. In terms of biological role, one of several proteins that assist in the late maturation steps of the functional core of the 30S ribosomal subunit. Associates with free 30S ribosomal subunits (but not with 30S subunits that are part of 70S ribosomes or polysomes). Required for efficient processing of 16S rRNA. May interact with the 5'-terminal helix region of 16S rRNA. The sequence is that of Ribosome-binding factor A from Thermotoga sp. (strain RQ2).